Here is a 404-residue protein sequence, read N- to C-terminus: Cysteine desulfurase IscS (404 aa).

Pyridoxal 5'-phosphate contacts are provided by residues 73–74, asparagine 153, glutamine 181, and 201–203; these read AT and SAH. The residue at position 204 (lysine 204) is an N6-(pyridoxal phosphate)lysine. Threonine 241 is a pyridoxal 5'-phosphate binding site. Cysteine 327 (cysteine persulfide intermediate) is an active-site residue. Cysteine 327 lines the [2Fe-2S] cluster pocket.

It belongs to the class-V pyridoxal-phosphate-dependent aminotransferase family. NifS/IscS subfamily. In terms of assembly, homodimer. Forms a heterotetramer with IscU, interacts with other sulfur acceptors. It depends on pyridoxal 5'-phosphate as a cofactor.

Its subcellular location is the cytoplasm. The catalysed reaction is (sulfur carrier)-H + L-cysteine = (sulfur carrier)-SH + L-alanine. It functions in the pathway cofactor biosynthesis; iron-sulfur cluster biosynthesis. In terms of biological role, master enzyme that delivers sulfur to a number of partners involved in Fe-S cluster assembly, tRNA modification or cofactor biosynthesis. Catalyzes the removal of elemental sulfur atoms from cysteine to produce alanine. Functions as a sulfur delivery protein for Fe-S cluster synthesis onto IscU, an Fe-S scaffold assembly protein, as well as other S acceptor proteins. The sequence is that of Cysteine desulfurase IscS from Anaeromyxobacter sp. (strain K).